A 129-amino-acid chain; its full sequence is Follitropin subunit beta (129 aa).

Positions 1 to 20 (MKTLQFFFLFCCWKAICCNS) are cleaved as a signal peptide. 6 disulfides stabilise this stretch: cysteine 21–cysteine 69, cysteine 35–cysteine 84, cysteine 38–cysteine 122, cysteine 46–cysteine 100, cysteine 50–cysteine 102, and cysteine 105–cysteine 112. N-linked (GlcNAc...) asparagine glycans are attached at residues asparagine 25 and asparagine 42.

It belongs to the glycoprotein hormones subunit beta family. In terms of assembly, heterodimer. The active follitropin is a heterodimer composed of an alpha chain/CGA shared with other hormones and a unique beta chain/FSHB shown here.

It localises to the secreted. Together with the alpha chain CGA constitutes follitropin, the follicle-stimulating hormone, and provides its biological specificity to the hormone heterodimer. Binds FSHR, a G protein-coupled receptor, on target cells to activate downstream signaling pathways. Follitropin is involved in follicle development and spermatogenesis in reproductive organs. This Pan troglodytes (Chimpanzee) protein is Follitropin subunit beta (FSHB).